The following is a 350-amino-acid chain: tRNA uridine(34) hydroxylase (350 aa).

One can recognise a Rhodanese domain in the interval 146–240 (DDPDAVFIDM…YARRAREQGL (95 aa)). Cysteine 200 (cysteine persulfide intermediate) is an active-site residue. Residues 319 to 328 (RRRRAGRENG) are compositionally biased toward basic and acidic residues. The segment at 319–350 (RRRRAGRENGNKIFNKSRGRLNSKLSIPDPAE) is disordered.

This sequence belongs to the TrhO family.

It catalyses the reaction uridine(34) in tRNA + AH2 + O2 = 5-hydroxyuridine(34) in tRNA + A + H2O. Its function is as follows. Catalyzes oxygen-dependent 5-hydroxyuridine (ho5U) modification at position 34 in tRNAs. The chain is tRNA uridine(34) hydroxylase from Salmonella agona (strain SL483).